A 376-amino-acid polypeptide reads, in one-letter code: Probable ribonucleoside-diphosphate reductase small subunit 048L (376 aa).

Asp-110, Glu-140, and His-143 together coordinate Fe cation. Tyr-147 is an active-site residue. Fe cation is bound by residues Glu-217, Glu-251, and His-254.

Belongs to the ribonucleoside diphosphate reductase small chain family. Heterotetramer composed of a homodimer of the large subunit (R1) and a homodimer of the small subunit (R2). Larger multisubunit protein complex are also active, composed of (R1)n(R2)n. It depends on Fe cation as a cofactor.

It carries out the reaction a 2'-deoxyribonucleoside 5'-diphosphate + [thioredoxin]-disulfide + H2O = a ribonucleoside 5'-diphosphate + [thioredoxin]-dithiol. Its function is as follows. Ribonucleoside-diphosphate reductase holoenzyme provides the precursors necessary for viral DNA synthesis. Allows virus growth in non-dividing cells. Catalyzes the biosynthesis of deoxyribonucleotides from the corresponding ribonucleotides. The protein is Probable ribonucleoside-diphosphate reductase small subunit 048L of Invertebrate iridescent virus 3 (IIV-3).